The primary structure comprises 140 residues: uncharacterized protein (140 aa).

A disordered region spans residues 80 to 115 (KNGTRRHALPSPLEGSFQPGRQIPPPQTPSTDPQTL).

This is an uncharacterized protein from Homo sapiens (Human).